The primary structure comprises 233 residues: Favin (233 aa).

The Mn(2+) site is built by Glu120 and Asp122. Ca(2+)-binding residues include Asp122, Phe124, Asn126, and Asp130. The Mn(2+) site is built by Asp130 and His137. The N-linked (GlcNAc...) asparagine glycan is linked to Asn168.

This sequence belongs to the leguminous lectin family. Heterodimer of an alpha and a beta chain.

In Vicia faba (Broad bean), this protein is Favin.